A 322-amino-acid polypeptide reads, in one-letter code: MLQTTPPDLLLGAPDLREAAAAWLAVLKTERRFSENTVEAYGRDLRQFLAHLARSGAAPDIPALVALKPRDLRAFMAARRAEGVSGRSLMRALAALRSFARHLDREGHGTVSALSAVRSPKVERRLPRPLPVAAAVAMASPDIRAGEDRPDWVLARDAAVLALLYGAGLRIGEALGIRRKDAPVGDIDTLTILGKGQKTRMVPVIAPVQAAVADYLAVCPHPLPPDGPLFVGQKGGPLSPRIVQLAVASLRGALGLPDSATPHALRHSFATHLLARQGDLRAIQDLLGHASLATTQVYTKVDSARLLSAFDAAHPRAGRPGG.

Residues 14–104 (PDLREAAAAW…ALRSFARHLD (91 aa)) form the Core-binding (CB) domain. The 187-residue stretch at 125-311 (RLPRPLPVAA…DSARLLSAFD (187 aa)) folds into the Tyr recombinase domain. Active-site residues include Arg170, Lys195, His263, Arg266, and His289. Tyr298 (O-(3'-phospho-DNA)-tyrosine intermediate) is an active-site residue.

Belongs to the 'phage' integrase family. XerC subfamily. As to quaternary structure, forms a cyclic heterotetrameric complex composed of two molecules of XerC and two molecules of XerD.

It localises to the cytoplasm. Site-specific tyrosine recombinase, which acts by catalyzing the cutting and rejoining of the recombining DNA molecules. The XerC-XerD complex is essential to convert dimers of the bacterial chromosome into monomers to permit their segregation at cell division. It also contributes to the segregational stability of plasmids. This Methylobacterium nodulans (strain LMG 21967 / CNCM I-2342 / ORS 2060) protein is Tyrosine recombinase XerC.